The primary structure comprises 292 residues: Ribonuclease HIII (292 aa).

Residues 76–292 form the RNase H type-2 domain; sequence TNLIGTDEVG…TQKAIKIAQL (217 aa). A divalent metal cation is bound by residues aspartate 82, glutamate 83, and aspartate 186.

The protein belongs to the RNase HII family. RnhC subfamily. Mn(2+) serves as cofactor. The cofactor is Mg(2+).

The protein localises to the cytoplasm. The enzyme catalyses Endonucleolytic cleavage to 5'-phosphomonoester.. Endonuclease that specifically degrades the RNA of RNA-DNA hybrids. The chain is Ribonuclease HIII from Lactococcus lactis subsp. lactis (strain IL1403) (Streptococcus lactis).